The primary structure comprises 339 residues: Cyclin-Y-like protein 1-A (339 aa).

The span at 1-13 (MGNTVTCCVSPDS) shows a compositional bias: polar residues. Residues 1-42 (MGNTVTCCVSPDSSPKEGRDREVTESGEPYQAQGEPQDGDVQ) form a disordered region. Positions 14 to 24 (SPKEGRDREVT) are enriched in basic and acidic residues. Residues 141–263 (DIFDEKLHPI…FLELLQFNIN (123 aa)) form the Cyclin N-terminal domain.

Belongs to the cyclin family. Cyclin Y subfamily.

The chain is Cyclin-Y-like protein 1-A (ccnyl1-a) from Xenopus laevis (African clawed frog).